We begin with the raw amino-acid sequence, 732 residues long: Eukaryotic translation initiation factor 3 subunit B (732 aa).

The interval M1–A94 is sufficient for interaction with HCR1 and TIF32. The tract at residues M1 to F219 is sufficient for interaction with PIC8. In terms of domain architecture, RRM spans N37–D120. 4 WD repeats span residues A185–R224, P237–T280, E439–A481, and V507–N554.

The protein belongs to the eIF-3 subunit B family. As to quaternary structure, component of the eukaryotic translation initiation factor 3 (eIF-3) complex.

Its subcellular location is the cytoplasm. RNA-binding component of the eukaryotic translation initiation factor 3 (eIF-3) complex, which is involved in protein synthesis of a specialized repertoire of mRNAs and, together with other initiation factors, stimulates binding of mRNA and methionyl-tRNAi to the 40S ribosome. The eIF-3 complex specifically targets and initiates translation of a subset of mRNAs involved in cell proliferation. This chain is Eukaryotic translation initiation factor 3 subunit B, found in Kluyveromyces lactis (strain ATCC 8585 / CBS 2359 / DSM 70799 / NBRC 1267 / NRRL Y-1140 / WM37) (Yeast).